The sequence spans 402 residues: 5-methylphenazine-1-carboxylate 1-monooxygenase (402 aa).

FAD is bound by residues 14–15 (IG), 35–36 (ES), 43–45 (LGV), Arg-106, Val-132, Arg-191, and Asp-310. Over residues 368–385 (REKEEWAAASRPKTEKSA) the composition is skewed to basic and acidic residues. A disordered region spans residues 368-402 (REKEEWAAASRPKTEKSAALEAITGSYRNQVERPR).

Monomer in solution. Probably interacts transiently with PhzM. FAD is required as a cofactor.

It catalyses the reaction 5-methyl-phenazine-1-carboxylate + NADH + O2 + 2 H(+) = pyocyanin + CO2 + NAD(+) + H2O. It functions in the pathway secondary metabolite biosynthesis; pyocyanine biosynthesis. In terms of biological role, involved in the biosynthesis of pyocyanine, a blue-pigmented phenazine derivative, which plays a role in virulence. Catalyzes the oxidative decarboxylation of 5-methylphenazine-1-carboxylate (5-methyl-PCA) to pyocyanine. Can also act on phenazine-1-carboxylate (PCA), converting it into 1-hydroxyphenazine (1-HP). However, PCA is a poor substrate. This Pseudomonas aeruginosa (strain ATCC 15692 / DSM 22644 / CIP 104116 / JCM 14847 / LMG 12228 / 1C / PRS 101 / PAO1) protein is 5-methylphenazine-1-carboxylate 1-monooxygenase.